The primary structure comprises 661 residues: Pentatricopeptide repeat-containing protein At5g66631 (661 aa).

PPR repeat units lie at residues 139-173 (VHFS…GEEK), 176-210 (CTES…GGIP), 211-245 (NSRT…RITR), 246-280 (TLKH…GKFP), 410-444 (DAYT…GIKL), 445-475 (PFST…DRTL), 484-518 (LMLL…GVSP), 519-553 (DIQT…GLEP), and 554-588 (DPYM…NLMP).

This sequence belongs to the PPR family. P subfamily.

In Arabidopsis thaliana (Mouse-ear cress), this protein is Pentatricopeptide repeat-containing protein At5g66631.